A 116-amino-acid polypeptide reads, in one-letter code: Beta-2-microglobulin (116 aa).

The N-terminal stretch at 1–19 (MRALITFALLCLLYITVQG) is a signal peptide. The Ig-like C1-type domain occupies 24–111 (PKVHVYSHFP…RHMKETKKFS (88 aa)). Residues cysteine 44 and cysteine 99 are joined by a disulfide bond.

This sequence belongs to the beta-2-microglobulin family. In terms of assembly, heterodimer of an alpha chain and a beta chain. Beta-2-microglobulin is the beta-chain of major histocompatibility complex class I molecules.

Its subcellular location is the secreted. Component of the class I major histocompatibility complex (MHC). Involved in the presentation of peptide antigens to the immune system. This Danio rerio (Zebrafish) protein is Beta-2-microglobulin (b2m).